The sequence spans 433 residues: Peptidoglycan glycosyltransferase RodA (433 aa).

Transmembrane regions (helical) follow at residues 9–29, 44–64, 74–94, 100–120, 158–178, 181–201, 221–241, 249–269, 295–315, 341–361, 378–398, and 400–420; these read FDYL…LFIY, YLKQ…VSMY, TLIF…GRYV, WIGV…AYIL, LGTA…AGFP, LIFA…LPLW, LSLF…VGYL, YWIT…LLGV, WHII…MGYL, WGFV…LHTL, GVLG…MGIM, and ITGI…TAMI.

It belongs to the SEDS family. MrdB/RodA subfamily.

It localises to the cell inner membrane. It carries out the reaction [GlcNAc-(1-&gt;4)-Mur2Ac(oyl-L-Ala-gamma-D-Glu-L-Lys-D-Ala-D-Ala)](n)-di-trans,octa-cis-undecaprenyl diphosphate + beta-D-GlcNAc-(1-&gt;4)-Mur2Ac(oyl-L-Ala-gamma-D-Glu-L-Lys-D-Ala-D-Ala)-di-trans,octa-cis-undecaprenyl diphosphate = [GlcNAc-(1-&gt;4)-Mur2Ac(oyl-L-Ala-gamma-D-Glu-L-Lys-D-Ala-D-Ala)](n+1)-di-trans,octa-cis-undecaprenyl diphosphate + di-trans,octa-cis-undecaprenyl diphosphate + H(+). The protein operates within cell wall biogenesis; peptidoglycan biosynthesis. Its function is as follows. Peptidoglycan polymerase that is essential for cell wall elongation. This is Peptidoglycan glycosyltransferase RodA from Treponema pallidum (strain Nichols).